A 692-amino-acid chain; its full sequence is UvrABC system protein C (692 aa).

Residues 16–95 (ETPGVYRFRD…IKEFDPRFNV (80 aa)) form the GIY-YIG domain. One can recognise a UVR domain in the interval 208 to 243 (GRYLRRLEREMRAAAEAQEYERAARLRDDIGALRRA). The tract at residues 492 to 511 (GELEEYPGAPTGDDEAPETG) is disordered.

Belongs to the UvrC family. Interacts with UvrB in an incision complex.

The protein resides in the cytoplasm. In terms of biological role, the UvrABC repair system catalyzes the recognition and processing of DNA lesions. UvrC both incises the 5' and 3' sides of the lesion. The N-terminal half is responsible for the 3' incision and the C-terminal half is responsible for the 5' incision. The sequence is that of UvrABC system protein C from Parafrankia sp. (strain EAN1pec).